A 2208-amino-acid polypeptide reads, in one-letter code: RNA-directed RNA polymerase L (2208 aa).

Residues 26–284 (KDALLSQVHP…LHQDSDTINC (259 aa)) are endonuclease. The Mn(2+) site is built by Glu-51, Asp-89, and Glu-102. The active site involves Lys-115. The region spanning 1171 to 1367 (CDMKMAVNNG…YLSSKLNKFV (197 aa)) is the RdRp catalytic domain. Residue Asp-1329 participates in Mg(2+) binding.

It belongs to the Bunyavirales RNA polymerase family. As to quaternary structure, homomultimer; the oligomeric structure is essential for the polymerase activity. Interacts with nucleoprotein N. Interacts with protein Z; this interaction inhibits viral transcription and replication, Z partially blocks the product exit tunnel for the releasing nascent RNA product. It depends on Mn(2+) as a cofactor. The cofactor is Mg(2+).

It localises to the virion. It is found in the host cytoplasm. It carries out the reaction RNA(n) + a ribonucleoside 5'-triphosphate = RNA(n+1) + diphosphate. In terms of biological role, RNA-dependent RNA polymerase, which is responsible for the replication and transcription of the viral RNA genome using antigenomic RNA as an intermediate. During transcription, synthesizes subgenomic RNAs and assures their capping by a cap-snatching mechanism, which involves the endonuclease activity cleaving the host capped pre-mRNAs. These short capped RNAs are then used as primers for viral transcription. The 3'-end of subgenomic mRNAs molecules are heterogeneous and not polyadenylated. The replicase function is to direct synthesis of antigenomic and genomic RNA which are encapsidated and non capped. As a consequence of the use of the same enzyme for both transcription and replication, these mechanisms need to be well coordinated. These processes may be regulated by proteins N and Z in a dose-dependent manner. Z protein inhibits the viral polymerase L und thus the viral transcription and RNA synthesis. This Homo sapiens (Human) protein is RNA-directed RNA polymerase L.